A 384-amino-acid polypeptide reads, in one-letter code: 8-amino-7-oxononanoate synthase (384 aa).

Substrate is bound at residue Arg21. 108-109 (GF) lines the pyridoxal 5'-phosphate pocket. Substrate is bound at residue His133. Pyridoxal 5'-phosphate contacts are provided by Ser179, His207, and Thr233. Position 236 is an N6-(pyridoxal phosphate)lysine (Lys236). Substrate is bound at residue Thr352.

Belongs to the class-II pyridoxal-phosphate-dependent aminotransferase family. BioF subfamily. In terms of assembly, homodimer. Requires pyridoxal 5'-phosphate as cofactor.

It carries out the reaction 6-carboxyhexanoyl-[ACP] + L-alanine + H(+) = (8S)-8-amino-7-oxononanoate + holo-[ACP] + CO2. It functions in the pathway cofactor biosynthesis; biotin biosynthesis. In terms of biological role, catalyzes the decarboxylative condensation of pimeloyl-[acyl-carrier protein] and L-alanine to produce 8-amino-7-oxononanoate (AON), [acyl-carrier protein], and carbon dioxide. In Escherichia coli O157:H7, this protein is 8-amino-7-oxononanoate synthase.